The sequence spans 101 residues: Small ribosomal subunit protein uS14 (101 aa).

It belongs to the universal ribosomal protein uS14 family. In terms of assembly, part of the 30S ribosomal subunit. Contacts proteins S3 and S10.

Functionally, binds 16S rRNA, required for the assembly of 30S particles and may also be responsible for determining the conformation of the 16S rRNA at the A site. This Citrobacter koseri (strain ATCC BAA-895 / CDC 4225-83 / SGSC4696) protein is Small ribosomal subunit protein uS14.